The chain runs to 430 residues: Aspartate aminotransferase, mitochondrial (430 aa).

The N-terminal 29 residues, 1–29 (MALLHSGRVLSGIAAAFHPGLAAAASARA), are a transit peptide targeting the mitochondrion. Phosphothreonine is present on threonine 48. Lysine 59 is subject to N6-acetyllysine. Glycine 65 contacts substrate. N6-acetyllysine; alternate is present on lysine 73. The residue at position 73 (lysine 73) is an N6-succinyllysine; alternate. At lysine 82 the chain carries N6-acetyllysine. Lysine 90 bears the N6-acetyllysine; alternate mark. An N6-succinyllysine; alternate modification is found at lysine 90. Tyrosine 96 is subject to 3'-nitrotyrosine; alternate. The residue at position 96 (tyrosine 96) is a Phosphotyrosine; alternate. An N6-acetyllysine; alternate mark is found at lysine 107 and lysine 122. 2 positions are modified to N6-succinyllysine; alternate: lysine 107 and lysine 122. Serine 143 is modified (phosphoserine). N6-acetyllysine; alternate is present on lysine 159. An N6-succinyllysine; alternate modification is found at lysine 159. Tryptophan 162 contacts substrate. Residue lysine 185 is modified to N6-acetyllysine; alternate. Lysine 185 bears the N6-succinyllysine; alternate mark. Asparagine 215 is a binding site for substrate. Lysine 227 carries the N6-succinyllysine modification. Position 234 is an N6-acetyllysine (lysine 234). Residues lysine 279 and lysine 296 each carry the N6-acetyllysine; alternate modification. Lysine 279 carries the N6-(pyridoxal phosphate)lysine; alternate modification. Position 296 is an N6-succinyllysine; alternate (lysine 296). The residue at position 302 (lysine 302) is an N6-acetyllysine. The residue at position 309 (lysine 309) is an N6-acetyllysine; alternate. Residue lysine 309 is modified to N6-succinyllysine; alternate. Arginine 313 bears the Asymmetric dimethylarginine mark. Threonine 333 carries the phosphothreonine modification. An N6-acetyllysine; alternate modification is found at lysine 338. N6-succinyllysine; alternate is present on lysine 338. Lysine 345 is modified (N6-acetyllysine). At lysine 363 the chain carries N6-acetyllysine; alternate. Lysine 363 is modified (N6-succinyllysine; alternate). Lysine 364 and lysine 387 each carry N6-acetyllysine. An N6-acetyllysine; alternate mark is found at lysine 396 and lysine 404. N6-succinyllysine; alternate is present on residues lysine 396 and lysine 404. A substrate-binding site is contributed by arginine 407.

The protein belongs to the class-I pyridoxal-phosphate-dependent aminotransferase family. As to quaternary structure, homodimer. Pyridoxal 5'-phosphate serves as cofactor.

The protein localises to the mitochondrion matrix. It localises to the cell membrane. It carries out the reaction L-aspartate + 2-oxoglutarate = oxaloacetate + L-glutamate. The catalysed reaction is L-kynurenine + 2-oxoglutarate = kynurenate + L-glutamate + H2O. Its function is as follows. Catalyzes the irreversible transamination of the L-tryptophan metabolite L-kynurenine to form kynurenic acid (KA). As a member of the malate-aspartate shuttle, it has a key role in the intracellular NAD(H) redox balance. Is important for metabolite exchange between mitochondria and cytosol, and for amino acid metabolism. Facilitates cellular uptake of long-chain free fatty acids. The polypeptide is Aspartate aminotransferase, mitochondrial (GOT2) (Macaca fascicularis (Crab-eating macaque)).